Here is a 196-residue protein sequence, read N- to C-terminus: tRNA(Phe) 7-((3-amino-3-carboxypropyl)-4-demethylwyosine(37)-N(4))-methyltransferase 1 (196 aa).

The protein belongs to the TYW3 family.

The enzyme catalyses 4-demethyl-7-[(3S)-3-amino-3-carboxypropyl]wyosine(37) in tRNA(Phe) + S-adenosyl-L-methionine = 7-[(3S)-3-amino-3-carboxypropyl]wyosine(37) in tRNA(Phe) + S-adenosyl-L-homocysteine + H(+). Functionally, S-adenosyl-L-methionine-dependent methyltransferase that acts as a component of the wyosine derivatives biosynthesis pathway. Probably methylates N-4 position of wybutosine-86 to produce wybutosine-72. The polypeptide is tRNA(Phe) 7-((3-amino-3-carboxypropyl)-4-demethylwyosine(37)-N(4))-methyltransferase 1 (Pyrococcus horikoshii (strain ATCC 700860 / DSM 12428 / JCM 9974 / NBRC 100139 / OT-3)).